The chain runs to 244 residues: 5-oxoprolinase subunit A (244 aa).

It belongs to the LamB/PxpA family. As to quaternary structure, forms a complex composed of PxpA, PxpB and PxpC.

It carries out the reaction 5-oxo-L-proline + ATP + 2 H2O = L-glutamate + ADP + phosphate + H(+). In terms of biological role, catalyzes the cleavage of 5-oxoproline to form L-glutamate coupled to the hydrolysis of ATP to ADP and inorganic phosphate. The sequence is that of 5-oxoprolinase subunit A from Escherichia fergusonii (strain ATCC 35469 / DSM 13698 / CCUG 18766 / IAM 14443 / JCM 21226 / LMG 7866 / NBRC 102419 / NCTC 12128 / CDC 0568-73).